Here is a 463-residue protein sequence, read N- to C-terminus: MDNGMLSRFIMTQTLLVFCISMTLSSHFGFSQMPTSSVQDETNDNITIFTRILDGLLDGYDNRLRPGLGERITQVRTDIYVTSFGPVSDTEMEYTIDVFFRQSWKDERLRFKGPMQRLPLNNLLASKIWTPDTFFHNGKKSIAHNMTTPNKLLRLEDDGTLLYTMRLTISAECPMQLEDFPMDAHACPLKFGSYAYPNSEVVYVWTNGSTKSVVVAEDGSRLNQYHLMGQTVGTENISTSTGEYTIMTAHFHLKRKIGYFVIQTYLPCIMTVILSQVSFWLNRESVPARTVFGVTTVLTMTTLSISARNSLPKVAYATAMDWFIAVCYAFVFSALIEFATVNYFTKRGWAWDGKKALEAAKIKKKERELILNKSTNAFTTGKLTHPPNIPKEQPPAGTANAPTVSIKASEEKTAESKKTYNSISKIDKMSRIVFPILFGTFNLVYWATYLNREPVIKGATSPK.

The first 25 residues, 1–25 (MDNGMLSRFIMTQTLLVFCISMTLS), serve as a signal peptide directing secretion. Topologically, residues 26–260 (SHFGFSQMPT…FHLKRKIGYF (235 aa)) are extracellular. An N-linked (GlcNAc...) asparagine glycan is attached at N45. R101 is a 4-aminobutanoate binding site. N145 carries N-linked (GlcNAc...) asparagine glycosylation. T164 is a binding site for 4-aminobutanoate. The cysteines at positions 173 and 187 are disulfide-linked. 2 N-linked (GlcNAc...) asparagine glycosylation sites follow: N207 and N236. 3 helical membrane passes run 261-281 (VIQT…SFWL), 287-308 (PART…ISAR), and 319-340 (AMDW…EFAT). The Cytoplasmic portion of the chain corresponds to 341-428 (VNYFTKRGWA…TYNSISKIDK (88 aa)). Residue K355 forms a Glycyl lysine isopeptide (Lys-Gly) (interchain with G-Cter in ubiquitin) linkage. Positions 387–408 (PNIPKEQPPAGTANAPTVSIKA) are disordered. The helical transmembrane segment at 429 to 449 (MSRIVFPILFGTFNLVYWATY) threads the bilayer.

The protein belongs to the ligand-gated ion channel (TC 1.A.9) family. Gamma-aminobutyric acid receptor (TC 1.A.9.5) subfamily. GABRA5 sub-subfamily. Heteropentamer, formed by a combination of alpha (GABRA1-6), beta (GABRB1-3), gamma (GABRG1-3), delta (GABRD), epsilon (GABRE), rho (GABRR1-3), pi (GABRP) and theta (GABRQ) chains, each subunit exhibiting distinct physiological and pharmacological properties. As to expression, expressed in brain, in hippocampal pyramidal neurons.

The protein resides in the postsynaptic cell membrane. The protein localises to the cell membrane. The catalysed reaction is chloride(in) = chloride(out). In terms of biological role, alpha subunit of the heteropentameric ligand-gated chloride channel gated by gamma-aminobutyric acid (GABA), a major inhibitory neurotransmitter in the brain. GABA-gated chloride channels, also named GABA(A) receptors (GABAAR), consist of five subunits arranged around a central pore and contain GABA active binding site(s) located at the alpha and beta subunit interface(s). When activated by GABA, GABAARs selectively allow the flow of chloride anions across the cell membrane down their electrochemical gradient. GABAARs containing alpha-5/GABRA5 are mainly extrasynaptic and contribute to the tonic GABAergic inhibition of the hippocampus. Extrasynaptic alpha-5-containing GABAARs in CA1 pyramidal neurons play a role in learning and memory processes. The chain is Gamma-aminobutyric acid receptor subunit alpha-5 from Mus musculus (Mouse).